The following is a 118-amino-acid chain: Cell division protein FtsB (118 aa).

The Cytoplasmic portion of the chain corresponds to 1 to 3 (MRL). A helical membrane pass occupies residues 4–21 (LFLVLLVLLGLIQYPLWL). Residues 22 to 118 (GKGGWFKVWD…PRPPATPPRR (97 aa)) are Periplasmic-facing. Residues 28-62 (KVWDLQRQVAEQRETNDGLRARNTALEAEVRDLAT) adopt a coiled-coil conformation. The disordered stretch occupies residues 88–118 (LPPGTPLPSDNSTPQASALSKPRPPATPPRR). Residues 95–105 (PSDNSTPQASA) show a composition bias toward polar residues. Residues 109-118 (PRPPATPPRR) are compositionally biased toward pro residues.

This sequence belongs to the FtsB family. As to quaternary structure, part of a complex composed of FtsB, FtsL and FtsQ.

It is found in the cell inner membrane. In terms of biological role, essential cell division protein. May link together the upstream cell division proteins, which are predominantly cytoplasmic, with the downstream cell division proteins, which are predominantly periplasmic. This Bordetella bronchiseptica (strain ATCC BAA-588 / NCTC 13252 / RB50) (Alcaligenes bronchisepticus) protein is Cell division protein FtsB.